We begin with the raw amino-acid sequence, 526 residues long: UDP-N-acetylmuramoyl-L-alanyl-D-glutamate--2,6-diaminopimelate ligase (526 aa).

UDP-N-acetyl-alpha-D-muramoyl-L-alanyl-D-glutamate is bound by residues L48 and S50. 136–142 (GTSGKTT) is an ATP binding site. UDP-N-acetyl-alpha-D-muramoyl-L-alanyl-D-glutamate-binding positions include 178–179 (TT), S205, and R213. K245 bears the N6-carboxylysine mark. Meso-2,6-diaminopimelate-binding positions include R408, 432–435 (DNPR), G490, and E494. The Meso-diaminopimelate recognition motif signature appears at 432–435 (DNPR).

The protein belongs to the MurCDEF family. MurE subfamily. Mg(2+) is required as a cofactor. Carboxylation is probably crucial for Mg(2+) binding and, consequently, for the gamma-phosphate positioning of ATP.

Its subcellular location is the cytoplasm. It carries out the reaction UDP-N-acetyl-alpha-D-muramoyl-L-alanyl-D-glutamate + meso-2,6-diaminopimelate + ATP = UDP-N-acetyl-alpha-D-muramoyl-L-alanyl-gamma-D-glutamyl-meso-2,6-diaminopimelate + ADP + phosphate + H(+). The protein operates within cell wall biogenesis; peptidoglycan biosynthesis. In terms of biological role, catalyzes the addition of meso-diaminopimelic acid to the nucleotide precursor UDP-N-acetylmuramoyl-L-alanyl-D-glutamate (UMAG) in the biosynthesis of bacterial cell-wall peptidoglycan. This is UDP-N-acetylmuramoyl-L-alanyl-D-glutamate--2,6-diaminopimelate ligase from Corynebacterium efficiens (strain DSM 44549 / YS-314 / AJ 12310 / JCM 11189 / NBRC 100395).